Consider the following 546-residue polypeptide: Chaperonin GroEL 2 (546 aa).

Residues T30–P33, K51, D87–T91, G415, and D496 contribute to the ATP site.

The protein belongs to the chaperonin (HSP60) family. Forms a cylinder of 14 subunits composed of two heptameric rings stacked back-to-back. Interacts with the co-chaperonin GroES.

Its subcellular location is the cytoplasm. It catalyses the reaction ATP + H2O + a folded polypeptide = ADP + phosphate + an unfolded polypeptide.. Its function is as follows. Together with its co-chaperonin GroES, plays an essential role in assisting protein folding. The GroEL-GroES system forms a nano-cage that allows encapsulation of the non-native substrate proteins and provides a physical environment optimized to promote and accelerate protein folding. This Bradyrhizobium sp. (strain ORS 278) protein is Chaperonin GroEL 2.